We begin with the raw amino-acid sequence, 877 residues long: Phosphoenolpyruvate carboxylase (877 aa).

Catalysis depends on residues H138 and K543.

It belongs to the PEPCase type 1 family. The cofactor is Mg(2+).

The enzyme catalyses oxaloacetate + phosphate = phosphoenolpyruvate + hydrogencarbonate. Functionally, forms oxaloacetate, a four-carbon dicarboxylic acid source for the tricarboxylic acid cycle. The sequence is that of Phosphoenolpyruvate carboxylase from Aeromonas salmonicida (strain A449).